The chain runs to 186 residues: Probable GPI-anchored cupredoxin ARB_05732-1 (186 aa).

The signal sequence occupies residues 1 to 18; the sequence is MVNMNILTTVALAGLAAA. Position 55 (His55) interacts with Cu cation. Cys66 and Cys104 are oxidised to a cystine. An N-linked (GlcNAc...) asparagine glycan is attached at Asn87. The Cu cation site is built by Cys98 and His103. A disordered region spans residues 130–160; that stretch reads GAGNGQAPSRVNNGSSGSGTPTSGGAPAATS. An N-linked (GlcNAc...) asparagine glycan is attached at Asn142. Low complexity predominate over residues 143–160; that stretch reads GSSGSGTPTSGGAPAATS. Residue Gly153 is the site of GPI-anchor amidated glycine attachment. Positions 154 to 186 are cleaved as a propeptide — removed in mature form; it reads GAPAATSPNAASSLTFSGAAALVAMGGAWIGLL.

It belongs to the multicopper oxidase family. Requires Cu cation as cofactor.

It is found in the cell membrane. The protein localises to the secreted. In terms of biological role, probable electron transfer copper protein that serves as a direct electron donor. The polypeptide is Probable GPI-anchored cupredoxin ARB_05732-1 (Arthroderma benhamiae (strain ATCC MYA-4681 / CBS 112371) (Trichophyton mentagrophytes)).